Here is a 188-residue protein sequence, read N- to C-terminus: Dual specificity protein phosphatase 18 (188 aa).

In terms of domain architecture, Tyrosine-protein phosphatase spans Gly-19–Gly-160. Cys-104 functions as the Phosphocysteine intermediate in the catalytic mechanism.

It belongs to the protein-tyrosine phosphatase family. Non-receptor class dual specificity subfamily. Widely expressed with highest levels in liver, brain, ovary and testis.

It is found in the cytoplasm. Its subcellular location is the nucleus. The protein resides in the mitochondrion inner membrane. The enzyme catalyses O-phospho-L-tyrosyl-[protein] + H2O = L-tyrosyl-[protein] + phosphate. The catalysed reaction is O-phospho-L-seryl-[protein] + H2O = L-seryl-[protein] + phosphate. It catalyses the reaction O-phospho-L-threonyl-[protein] + H2O = L-threonyl-[protein] + phosphate. With respect to regulation, activated by manganese ions, inhibited by iodoacetic acid. Its function is as follows. Can dephosphorylate single and diphosphorylated synthetic MAPK peptides, with preference for the phosphotyrosine and diphosphorylated forms over phosphothreonine. In vitro, dephosphorylates p-nitrophenyl phosphate (pNPP). This chain is Dual specificity protein phosphatase 18 (DUSP18), found in Homo sapiens (Human).